A 225-amino-acid polypeptide reads, in one-letter code: Large ribosomal subunit protein bL25 (225 aa).

The interval 206–225 (EDSKNKITKDNETNKDKSNL) is disordered.

This sequence belongs to the bacterial ribosomal protein bL25 family. CTC subfamily. Part of the 50S ribosomal subunit; part of the 5S rRNA/L5/L18/L25 subcomplex. Contacts the 5S rRNA. Binds to the 5S rRNA independently of L5 and L18.

Functionally, this is one of the proteins that binds to the 5S RNA in the ribosome where it forms part of the central protuberance. The sequence is that of Large ribosomal subunit protein bL25 from Vesicomyosocius okutanii subsp. Calyptogena okutanii (strain HA).